A 273-amino-acid chain; its full sequence is 4-hydroxy-tetrahydrodipicolinate reductase (273 aa).

NAD(+) is bound by residues G12 to M17 and E38. R39 contacts NADP(+). Residues G102–T104 and A126–F129 contribute to the NAD(+) site. H159 serves as the catalytic Proton donor/acceptor. H160 contributes to the (S)-2,3,4,5-tetrahydrodipicolinate binding site. Catalysis depends on K163, which acts as the Proton donor. Position 169–170 (G169–T170) interacts with (S)-2,3,4,5-tetrahydrodipicolinate.

This sequence belongs to the DapB family. In terms of assembly, homotetramer.

The protein resides in the cytoplasm. It carries out the reaction (S)-2,3,4,5-tetrahydrodipicolinate + NAD(+) + H2O = (2S,4S)-4-hydroxy-2,3,4,5-tetrahydrodipicolinate + NADH + H(+). It catalyses the reaction (S)-2,3,4,5-tetrahydrodipicolinate + NADP(+) + H2O = (2S,4S)-4-hydroxy-2,3,4,5-tetrahydrodipicolinate + NADPH + H(+). Its pathway is amino-acid biosynthesis; L-lysine biosynthesis via DAP pathway; (S)-tetrahydrodipicolinate from L-aspartate: step 4/4. Its function is as follows. Catalyzes the conversion of 4-hydroxy-tetrahydrodipicolinate (HTPA) to tetrahydrodipicolinate. The protein is 4-hydroxy-tetrahydrodipicolinate reductase of Escherichia coli O127:H6 (strain E2348/69 / EPEC).